The following is a 316-amino-acid chain: tRNA pseudouridine synthase B (316 aa).

Asp-47 functions as the Nucleophile in the catalytic mechanism.

This sequence belongs to the pseudouridine synthase TruB family. Type 1 subfamily.

It catalyses the reaction uridine(55) in tRNA = pseudouridine(55) in tRNA. Functionally, responsible for synthesis of pseudouridine from uracil-55 in the psi GC loop of transfer RNAs. In Aliivibrio fischeri (strain ATCC 700601 / ES114) (Vibrio fischeri), this protein is tRNA pseudouridine synthase B.